We begin with the raw amino-acid sequence, 424 residues long: UDP-N-acetylglucosamine 1-carboxyvinyltransferase (424 aa).

Position 22 to 23 (22 to 23) interacts with phosphoenolpyruvate; the sequence is KN. Arg93 is a binding site for UDP-N-acetyl-alpha-D-glucosamine. Cys117 serves as the catalytic Proton donor. The residue at position 117 (Cys117) is a 2-(S-cysteinyl)pyruvic acid O-phosphothioketal. UDP-N-acetyl-alpha-D-glucosamine is bound by residues 122-126, 162-165, Asp307, and Ile329; these read RPVDL and KVSV.

This sequence belongs to the EPSP synthase family. MurA subfamily.

It is found in the cytoplasm. It catalyses the reaction phosphoenolpyruvate + UDP-N-acetyl-alpha-D-glucosamine = UDP-N-acetyl-3-O-(1-carboxyvinyl)-alpha-D-glucosamine + phosphate. It participates in cell wall biogenesis; peptidoglycan biosynthesis. Its function is as follows. Cell wall formation. Adds enolpyruvyl to UDP-N-acetylglucosamine. The chain is UDP-N-acetylglucosamine 1-carboxyvinyltransferase from Haemophilus influenzae (strain PittEE).